The primary structure comprises 116 residues: Aspartate 1-decarboxylase (116 aa).

S25 functions as the Schiff-base intermediate with substrate; via pyruvic acid in the catalytic mechanism. Residue S25 is modified to Pyruvic acid (Ser). T57 is a substrate binding site. Residue Y58 is the Proton donor of the active site. 73 to 75 serves as a coordination point for substrate; the sequence is GPA.

Belongs to the PanD family. In terms of assembly, heterooctamer of four alpha and four beta subunits. It depends on pyruvate as a cofactor. Post-translationally, is synthesized initially as an inactive proenzyme, which is activated by self-cleavage at a specific serine bond to produce a beta-subunit with a hydroxyl group at its C-terminus and an alpha-subunit with a pyruvoyl group at its N-terminus.

It localises to the cytoplasm. The catalysed reaction is L-aspartate + H(+) = beta-alanine + CO2. It participates in cofactor biosynthesis; (R)-pantothenate biosynthesis; beta-alanine from L-aspartate: step 1/1. Its function is as follows. Catalyzes the pyruvoyl-dependent decarboxylation of aspartate to produce beta-alanine. The polypeptide is Aspartate 1-decarboxylase (Flavobacterium psychrophilum (strain ATCC 49511 / DSM 21280 / CIP 103535 / JIP02/86)).